The following is a 468-amino-acid chain: Uronate isomerase (468 aa).

Belongs to the metallo-dependent hydrolases superfamily. Uronate isomerase family.

It catalyses the reaction D-glucuronate = D-fructuronate. It carries out the reaction aldehydo-D-galacturonate = keto-D-tagaturonate. It functions in the pathway carbohydrate metabolism; pentose and glucuronate interconversion. This chain is Uronate isomerase, found in Bacteroides fragilis (strain ATCC 25285 / DSM 2151 / CCUG 4856 / JCM 11019 / LMG 10263 / NCTC 9343 / Onslow / VPI 2553 / EN-2).